We begin with the raw amino-acid sequence, 130 residues long: Large ribosomal subunit protein uL22 (130 aa).

The protein belongs to the universal ribosomal protein uL22 family. In terms of assembly, part of the 50S ribosomal subunit.

This protein binds specifically to 23S rRNA; its binding is stimulated by other ribosomal proteins, e.g. L4, L17, and L20. It is important during the early stages of 50S assembly. It makes multiple contacts with different domains of the 23S rRNA in the assembled 50S subunit and ribosome. In terms of biological role, the globular domain of the protein is located near the polypeptide exit tunnel on the outside of the subunit, while an extended beta-hairpin is found that lines the wall of the exit tunnel in the center of the 70S ribosome. This Clavibacter michiganensis subsp. michiganensis (strain NCPPB 382) protein is Large ribosomal subunit protein uL22.